Reading from the N-terminus, the 236-residue chain is 15,16-dihydrobiliverdin:ferredoxin oxidoreductase (236 aa).

Belongs to the HY2 family.

The enzyme catalyses 15,16-dihydrobiliverdin + oxidized 2[4Fe-4S]-[ferredoxin] = biliverdin IXalpha + reduced 2[4Fe-4S]-[ferredoxin] + 2 H(+). Catalyzes the two-electron reduction of biliverdin IX-alpha at the C15 methine bridge. In Prochlorococcus marinus (strain AS9601), this protein is 15,16-dihydrobiliverdin:ferredoxin oxidoreductase.